A 189-amino-acid polypeptide reads, in one-letter code: MyoD family inhibitor domain-containing protein 2 (189 aa).

The MDFI domain maps to 28 to 188 (KEDTQLTNAK…LAMEISEICY (161 aa)).

It belongs to the MDFI family.

The protein is MyoD family inhibitor domain-containing protein 2 of Homo sapiens (Human).